The primary structure comprises 286 residues: Formamidopyrimidine-DNA glycosylase (286 aa).

P2 acts as the Schiff-base intermediate with DNA in catalysis. E3 functions as the Proton donor in the catalytic mechanism. K61 (proton donor; for beta-elimination activity) is an active-site residue. Positions 96, 115, and 161 each coordinate DNA. Residues 247–281 form an FPG-type zinc finger; that stretch reads EAYGREGEPCRRCGRAMRREAFMNRSSYFCPSCQR. The active-site Proton donor; for delta-elimination activity is the R271.

It belongs to the FPG family. Monomer. It depends on Zn(2+) as a cofactor.

The enzyme catalyses Hydrolysis of DNA containing ring-opened 7-methylguanine residues, releasing 2,6-diamino-4-hydroxy-5-(N-methyl)formamidopyrimidine.. It catalyses the reaction 2'-deoxyribonucleotide-(2'-deoxyribose 5'-phosphate)-2'-deoxyribonucleotide-DNA = a 3'-end 2'-deoxyribonucleotide-(2,3-dehydro-2,3-deoxyribose 5'-phosphate)-DNA + a 5'-end 5'-phospho-2'-deoxyribonucleoside-DNA + H(+). Involved in base excision repair of DNA damaged by oxidation or by mutagenic agents. Acts as a DNA glycosylase that recognizes and removes damaged bases. Has a preference for oxidized purines, such as 7,8-dihydro-8-oxoguanine (8-oxoG). Has AP (apurinic/apyrimidinic) lyase activity and introduces nicks in the DNA strand. Cleaves the DNA backbone by beta-delta elimination to generate a single-strand break at the site of the removed base with both 3'- and 5'-phosphates. The protein is Formamidopyrimidine-DNA glycosylase of Mycobacteroides abscessus (strain ATCC 19977 / DSM 44196 / CCUG 20993 / CIP 104536 / JCM 13569 / NCTC 13031 / TMC 1543 / L948) (Mycobacterium abscessus).